Here is a 301-residue protein sequence, read N- to C-terminus: MKIAILSRDAKLYSTRRLMEAARANGHEVQVLDPLRCYMNITSAKPTIHYKGKELTGFDAVIPRIGASITFYGTAVLRQFEMMGVFPVNESVAISRARDKLRSLQLLSRKGVGLPVTGFAHSPDDIDDLLAEVQGAPLVVKLLEGTQGVGVVLAETRKAAESVIQAFMGLRQNILVQEFVKEAGGTDLRCFVIGGKVVAAMQRRAKEGEFRSNLHRGGSAEPVKLTPQERATAVKAAKVIGLNVCGVDILRSSHGPVVIEVNASPGLEGIETASGVDVAGRIVSFIEQNARPHRTQTRGKG.

The region spanning 104–287 is the ATP-grasp domain; the sequence is LQLLSRKGVG…VAGRIVSFIE (184 aa). ATP contacts are provided by residues K141, 178–179, D187, and 211–213; these read EF and RSN. Mg(2+)-binding residues include D248, E260, and N262. Mn(2+) is bound by residues D248, E260, and N262.

It belongs to the RimK family. Mg(2+) serves as cofactor. It depends on Mn(2+) as a cofactor.

This chain is Probable alpha-L-glutamate ligase, found in Thioalkalivibrio sulfidiphilus (strain HL-EbGR7).